The primary structure comprises 450 residues: Sorting nexin-4 (450 aa).

Methionine 1 bears the N-acetylmethionine mark. The segment at 1–46 (MEQAPPDPERQLQPAPLEPLGSPDAVLGAAVGKETEGAGEESSGVD) is disordered. Serine 22 carries the phosphoserine modification. The region spanning 61 to 187 (SVSEAEKRTG…YLFLTQEGNW (127 aa)) is the PX domain. Residues arginine 106, serine 108, lysine 132, and arginine 154 each coordinate a 1,2-diacyl-sn-glycero-3-phospho-(1D-myo-inositol-3-phosphate).

It belongs to the sorting nexin family. As to quaternary structure, heterodimer; heterodimerizes with SNX7 or SNX30. Interacts with WWC1/KIBRA. Identified in a complex with WWC1/KIBRA and dynein components DYNLL1 and DYNC1I2. Interacts with BIN1.

The protein localises to the early endosome. It is found in the early endosome membrane. Involved in the regulation of endocytosis and in several stages of intracellular trafficking. Plays a role in recycling endocytosed transferrin receptor and prevent its degradation. Involved in autophagosome assembly by regulating trafficking and recycling of phospholipid scramblase ATG9A. The protein is Sorting nexin-4 of Pongo abelii (Sumatran orangutan).